Reading from the N-terminus, the 337-residue chain is Mannitol dehydrogenase (337 aa).

Residues Cys27, His49, Cys80, Cys83, Cys86, Cys94, and Cys143 each coordinate Zn(2+).

This sequence belongs to the zinc-containing alcohol dehydrogenase family. It depends on Zn(2+) as a cofactor.

The catalysed reaction is D-mannitol + NAD(+) = D-mannose + NADH + H(+). Functionally, oxidizes mannitol to mannose. Provides the initial step by which translocated mannitol is committed to central metabolism and, by regulating mannitol pool size, is important in regulating salt tolerance at the cellular level. The sequence is that of Mannitol dehydrogenase (ELI3) from Petroselinum crispum (Parsley).